The primary structure comprises 154 residues: Putative nuclear shuttle protein (154 aa).

The protein belongs to the nanoviridae nuclear shuttle protein family.

The protein localises to the host nucleus. Its subcellular location is the host cytoplasm. Putative nuclear shuttle protein. The sequence is that of Putative nuclear shuttle protein (DNA-N) from Musa (BBTV).